The following is a 141-amino-acid chain: MAIERTLSIIKPDAVAKNVIGQILARFEGAGLKIAAARLAQLSRAEAEQFYAVHKARPFFNDLVNFMISGPVMIQVLEGEGAILKNRDLMGATDPKKAEKGTIRADFADSIDANAVHGSDAPETAAVEIAFFFPGMAVYSR.

Lys11, Phe59, Arg87, Thr93, Arg104, and Asn114 together coordinate ATP. His117 (pros-phosphohistidine intermediate) is an active-site residue.

It belongs to the NDK family. Homotetramer. Requires Mg(2+) as cofactor.

Its subcellular location is the cytoplasm. The catalysed reaction is a 2'-deoxyribonucleoside 5'-diphosphate + ATP = a 2'-deoxyribonucleoside 5'-triphosphate + ADP. It carries out the reaction a ribonucleoside 5'-diphosphate + ATP = a ribonucleoside 5'-triphosphate + ADP. Its function is as follows. Major role in the synthesis of nucleoside triphosphates other than ATP. The ATP gamma phosphate is transferred to the NDP beta phosphate via a ping-pong mechanism, using a phosphorylated active-site intermediate. This is Nucleoside diphosphate kinase from Leptothrix cholodnii (strain ATCC 51168 / LMG 8142 / SP-6) (Leptothrix discophora (strain SP-6)).